The primary structure comprises 320 residues: Cytochrome f (320 aa).

A signal peptide spans 1 to 35 (MQTRNAFSWIKKEITRSISVLLMIYIITRAPISNA). Heme-binding residues include Tyr36, Cys56, Cys59, and His60. The chain crosses the membrane as a helical span at residues 286 to 305 (VQGLLLFLASIILAQILLVL).

This sequence belongs to the cytochrome f family. As to quaternary structure, the 4 large subunits of the cytochrome b6-f complex are cytochrome b6, subunit IV (17 kDa polypeptide, petD), cytochrome f and the Rieske protein, while the 4 small subunits are PetG, PetL, PetM and PetN. The complex functions as a dimer. Heme is required as a cofactor.

It localises to the plastid. The protein localises to the chloroplast thylakoid membrane. In terms of biological role, component of the cytochrome b6-f complex, which mediates electron transfer between photosystem II (PSII) and photosystem I (PSI), cyclic electron flow around PSI, and state transitions. This chain is Cytochrome f (petA), found in Pisum sativum (Garden pea).